We begin with the raw amino-acid sequence, 596 residues long: Proline--tRNA ligase (596 aa).

The protein belongs to the class-II aminoacyl-tRNA synthetase family. ProS type 1 subfamily. In terms of assembly, homodimer.

The protein resides in the cytoplasm. The catalysed reaction is tRNA(Pro) + L-proline + ATP = L-prolyl-tRNA(Pro) + AMP + diphosphate. Functionally, catalyzes the attachment of proline to tRNA(Pro) in a two-step reaction: proline is first activated by ATP to form Pro-AMP and then transferred to the acceptor end of tRNA(Pro). As ProRS can inadvertently accommodate and process non-cognate amino acids such as alanine and cysteine, to avoid such errors it has two additional distinct editing activities against alanine. One activity is designated as 'pretransfer' editing and involves the tRNA(Pro)-independent hydrolysis of activated Ala-AMP. The other activity is designated 'posttransfer' editing and involves deacylation of mischarged Ala-tRNA(Pro). The misacylated Cys-tRNA(Pro) is not edited by ProRS. This is Proline--tRNA ligase from Prochlorococcus marinus (strain NATL1A).